The sequence spans 94 residues: Co-chaperonin GroES (94 aa).

Belongs to the GroES chaperonin family. As to quaternary structure, heptamer of 7 subunits arranged in a ring. Interacts with the chaperonin GroEL.

It is found in the cytoplasm. Together with the chaperonin GroEL, plays an essential role in assisting protein folding. The GroEL-GroES system forms a nano-cage that allows encapsulation of the non-native substrate proteins and provides a physical environment optimized to promote and accelerate protein folding. GroES binds to the apical surface of the GroEL ring, thereby capping the opening of the GroEL channel. The chain is Co-chaperonin GroES from Lactococcus lactis subsp. cremoris (strain SK11).